We begin with the raw amino-acid sequence, 273 residues long: Tryptase (273 aa).

An N-terminal signal peptide occupies residues 1–18 (MLKLLLLTLPLLSSLVHA). Positions 19 to 28 (APSLAMPREG) are cleaved as a propeptide — activation peptide. In terms of domain architecture, Peptidase S1 spans 29 to 270 (IVGGQEASGN…YLDWIYRYVP (242 aa)). The N-linked (GlcNAc...) asparagine glycan is linked to Asn-49. Cys-57 and Cys-73 form a disulfide bridge. Active-site charge relay system residues include His-72 and Asp-119. Cystine bridges form between Cys-153–Cys-228, Cys-186–Cys-209, and Cys-218–Cys-246. Ser-222 serves as the catalytic Charge relay system.

Belongs to the peptidase S1 family. Tryptase subfamily. As to quaternary structure, homotetramer. In terms of processing, glycosylated. Mast cells.

Its subcellular location is the secreted. It catalyses the reaction Preferential cleavage: Arg-|-Xaa, Lys-|-Xaa, but with more restricted specificity than trypsin.. Its function is as follows. Tryptase is the major neutral protease present in mast cells and is secreted upon the coupled activation-degranulation response of this cell type. May play a role in innate immunity. The chain is Tryptase (Tpsab1) from Rattus norvegicus (Rat).